Here is a 423-residue protein sequence, read N- to C-terminus: ATP-citrate synthase alpha chain protein 2 (423 aa).

Residues asparagine 343, threonine 345, and arginine 376 each coordinate citrate.

It belongs to the succinate/malate CoA ligase beta subunit family. As to quaternary structure, heterooctamer of 4 alpha and 4 beta chains.

It localises to the cytoplasm. The protein resides in the cytosol. The catalysed reaction is oxaloacetate + acetyl-CoA + ADP + phosphate = citrate + ATP + CoA. Functionally, ATP citrate-lyase is the primary enzyme responsible for the synthesis of cytosolic acetyl-CoA, used for the elongation of fatty acids and biosynthesis of isoprenoids, flavonoids and malonated derivatives. May supply substrate to the cytosolic acetyl-CoA carboxylase, which generates the malonyl-CoA used for the synthesis of a multitude of compounds, including very long chain fatty acids and flavonoids. In contrast to all known animal ACL enzymes having a homomeric structure, plant ACLs are composed of alpha and beta chains. The sequence is that of ATP-citrate synthase alpha chain protein 2 (ACLA-2) from Oryza sativa subsp. japonica (Rice).